The following is a 483-amino-acid chain: Proton-coupled amino acid transporter 2 (483 aa).

Over 1 to 58 the chain is Cytoplasmic; that stretch reads MSVTKSTEGPQGAVAIKLDLMSPPESAKKLENKDSTFLDESPSESAGLKKTKGITVFQ. The segment covering 26–36 has biased composition (basic and acidic residues); it reads SAKKLENKDST. The tract at residues 26–46 is disordered; that stretch reads SAKKLENKDSTFLDESPSESA. The helical transmembrane segment at 59 to 79 threads the bilayer; it reads ALIHLVKGNMGTGILGLPLAV. Residues 80–81 lie on the Extracellular side of the membrane; sequence KN. The chain crosses the membrane as a helical span at residues 82 to 102; sequence AGILMGPLSLLVMGFIACHCM. Residues 103–148 are Cytoplasmic-facing; that stretch reads HILVKCAQRFCKRLNKPFMDYGDTVMHGLEANPNAWLQNHAHWGRH. A helical membrane pass occupies residues 149–169; the sequence is IVSFFLIITQLGFCCVYIVFL. Over 170–197 the chain is Extracellular; it reads ADNLKQVVEAVNSTTNNCYSNETVILTP. Residues 198 to 218 form a helical membrane-spanning segment; the sequence is TMDSRLYMLSFLPFLVLLVLI. Residues 219–222 lie on the Cytoplasmic side of the membrane; that stretch reads RNLR. A helical transmembrane segment spans residues 223 to 243; it reads ILTIFSMLANISMLVSLVIII. Residues 244-264 are Extracellular-facing; sequence QYITQEIPDPSRLPLVASWKT. A helical membrane pass occupies residues 265 to 285; sequence YPLFFGTAIFSFESIGVVLPL. At 286–296 the chain is on the cytoplasmic side; sequence ENKMKNARHFP. The helical transmembrane segment at 297 to 317 threads the bilayer; it reads AILSLGMSIVTSLYIGMAALG. Residues 318-349 are Extracellular-facing; it reads YLRFGDDIKASISLNLPNCWLYQSVKLLYIAG. The chain crosses the membrane as a helical span at residues 350–370; the sequence is ILCTYALQFYVPAEIIIPFAI. The Cytoplasmic segment spans residues 371–379; it reads SRVSTRWAL. A helical membrane pass occupies residues 380–400; it reads PLDLSIRLVMVCLTCLLAILI. The Extracellular portion of the chain corresponds to 401-404; sequence PRLD. The helical transmembrane segment at 405–425 threads the bilayer; it reads LVISLVGSVSGTALALIIPPL. The Cytoplasmic portion of the chain corresponds to 426–437; it reads LEVTTFYSEGMS. Residues 438 to 458 form a helical membrane-spanning segment; sequence PLTIFKDALISILGFVGFVVG. At 459–483 the chain is on the extracellular side; the sequence is TYQALDELLKSEDSHPFSNSTTFVR.

Belongs to the amino acid/polyamine transporter 2 family. Abundantly expressed in kidney and muscle. Expressed in the S1 segment of the proximal tubule close to the glomerulus.

It localises to the cell membrane. Its subcellular location is the endoplasmic reticulum membrane. The protein localises to the recycling endosome membrane. It catalyses the reaction glycine(in) + H(+)(in) = glycine(out) + H(+)(out). It carries out the reaction L-alanine(in) + H(+)(in) = L-alanine(out) + H(+)(out). The catalysed reaction is D-alanine(in) + H(+)(in) = D-alanine(out) + H(+)(out). The enzyme catalyses L-proline(out) + H(+)(out) = L-proline(in) + H(+)(in). It catalyses the reaction D-proline(out) + H(+)(out) = D-proline(in) + H(+)(in). It carries out the reaction 4-hydroxy-L-proline(in) + H(+)(in) = 4-hydroxy-L-proline(out) + H(+)(out). The catalysed reaction is L-serine(in) + H(+)(in) = L-serine(out) + H(+)(out). The enzyme catalyses D-serine(out) + H(+)(out) = D-serine(in) + H(+)(in). It catalyses the reaction beta-alanine(in) + H(+)(in) = beta-alanine(out) + H(+)(out). It carries out the reaction 4-aminobutanoate(in) + H(+)(in) = 4-aminobutanoate(out) + H(+)(out). The catalysed reaction is sarcosine(in) + H(+)(in) = sarcosine(out) + H(+)(out). The enzyme catalyses N,N-dimethylglycine(in) + H(+)(in) = N,N-dimethylglycine(out) + H(+)(out). In terms of biological role, electrogenic proton/amino acid symporter with a high selectivity for the small side chains amino acids glycine, alanine and proline, where both L- and D-enantiomers are transported. Extension of the backbone length, as in beta-alanine and 4-aminobutanoate or methylation of the amino group, as in sarcosine and N,N-dimethylglycine, are also tolerated but decrease transport efficiency. A free carboxyl group is preferred. The protein is Proton-coupled amino acid transporter 2 of Homo sapiens (Human).